Reading from the N-terminus, the 68-residue chain is DNA-directed RNA polymerase subunit omega (68 aa).

The protein belongs to the RNA polymerase subunit omega family. The RNAP catalytic core consists of 2 alpha, 1 beta, 1 beta' and 1 omega subunit. When a sigma factor is associated with the core the holoenzyme is formed, which can initiate transcription.

It catalyses the reaction RNA(n) + a ribonucleoside 5'-triphosphate = RNA(n+1) + diphosphate. Promotes RNA polymerase assembly. Latches the N- and C-terminal regions of the beta' subunit thereby facilitating its interaction with the beta and alpha subunits. The polypeptide is DNA-directed RNA polymerase subunit omega (Geobacter sp. (strain M21)).